Consider the following 346-residue polypeptide: GTSQADVALLVVPADQGGFEGAFSKEGQTREHALLAFTLGVKQMIVGINKMDATTPDKYSETRFNEIQAEVSRYLKTVGYNPEKVPFVPISGFMGDNMVERSSNMPWYKGKILVEALDNVEPPKRPSDKPLRLPLQDVYKIGGIGTVPVGRVETGILKPGMVVCFAPTGLQTEVKSVEMHHTQLEQAVPGDNVGFNVKNVSVKDVKRGHVASDSKNDPAKAAASFQAQVIVLHHPGQINPGYSPVVDCHTAHIACKFAVLEKRLDRRSGKALEDDPKFIKTGDAAIIKMEPSKPMCVESFIEYPPLGRFAVRDMKQTVAVGVIKGVEKKEAGGKVTKSAQKATGKK.

The tr-type G domain occupies glycine 1–serine 127. A GTP-binding site is contributed by asparagine 49–aspartate 52.

This sequence belongs to the TRAFAC class translation factor GTPase superfamily. Classic translation factor GTPase family. EF-Tu/EF-1A subfamily.

The protein resides in the cytoplasm. In terms of biological role, this protein promotes the GTP-dependent binding of aminoacyl-tRNA to the A-site of ribosomes during protein biosynthesis. In Eimeria bovis, this protein is Elongation factor 1-alpha.